The chain runs to 454 residues: CBL-interacting protein kinase 17 (454 aa).

The 256-residue stretch at 13–268 (YEMGRTLGEG…MAGIKSHEWF (256 aa)) folds into the Protein kinase domain. ATP contacts are provided by residues 19 to 27 (LGEGNFGKV) and K42. The active-site Proton acceptor is D136. An activation loop region spans residues 154 to 183 (DFGLSALPQHLGNDGLLHTTCGSPNYIAPE). In terms of domain architecture, NAF spans 304-328 (KNSHQINAFQLIGMASSLDLSGFFE). Residues 334 to 363 (QRRIRFTSTHPPKDAFDKIESSATELGFQV) are PPI.

It belongs to the protein kinase superfamily. CAMK Ser/Thr protein kinase family. SNF1 subfamily. It depends on Mn(2+) as a cofactor.

It carries out the reaction L-seryl-[protein] + ATP = O-phospho-L-seryl-[protein] + ADP + H(+). It catalyses the reaction L-threonyl-[protein] + ATP = O-phospho-L-threonyl-[protein] + ADP + H(+). CIPK serine-threonine protein kinases interact with CBL proteins. Binding of a CBL protein to the regulatory NAF domain of CIPK protein lead to the activation of the kinase in a calcium-dependent manner. The protein is CBL-interacting protein kinase 17 (CIPK17) of Oryza sativa subsp. japonica (Rice).